The chain runs to 57 residues: UPF0509 protein YciZ (57 aa).

The protein belongs to the UPF0509 family.

The chain is UPF0509 protein YciZ (yciZ) from Shigella flexneri.